The primary structure comprises 355 residues: Eukaryotic initiation factor 4A-13 (355 aa).

The Q motif motif lies at 40–68; sequence DSFDAMGLQENLLRGIYAYGFEKPSAIQQ. A Helicase ATP-binding domain is found at 71–241; it reads IVPFCKGLDV…RKFMNQPVRI (171 aa). ATP is bound at residue 84 to 91; the sequence is AQSGTGKT. Residues 189-192 carry the DEAD box motif; sequence DEAD. One can recognise a Helicase C-terminal domain in the interval 252–355; the sequence is GIKQFYVNVD…QQVSLVINYD (104 aa).

It belongs to the DEAD box helicase family. eIF4A subfamily. In terms of assembly, eIF4F is a multi-subunit complex, the composition of which varies with external and internal environmental conditions. It is composed of at least EIF4A, EIF4E and EIF4G.

The enzyme catalyses ATP + H2O = ADP + phosphate + H(+). In terms of biological role, ATP-dependent RNA helicase which is a subunit of the eIF4F complex involved in cap recognition and is required for mRNA binding to ribosome. In the current model of translation initiation, eIF4A unwinds RNA secondary structures in the 5'-UTR of mRNAs which is necessary to allow efficient binding of the small ribosomal subunit, and subsequent scanning for the initiator codon. The sequence is that of Eukaryotic initiation factor 4A-13 from Nicotiana tabacum (Common tobacco).